The sequence spans 195 residues: Achaete-scute homolog 1b (195 aa).

In terms of domain architecture, bHLH spans 66–118 (MAVARRNERERNRVKQVNMGFQTLRQHVPNGAANKKMSKVETLRSAVEYIRAL). Positions 141 to 164 (VSNAYSAGPESPHSAYSSDEGSYE) are disordered.

In terms of assembly, efficient DNA binding requires dimerization with another bHLH protein. In terms of tissue distribution, in the 24 hours embryo, expressed in hindbrain close to the anterior and posterior boundaries of rhombomeres 2-6 and in ventral cells close to the floor plate of most rhombomeres. Also expressed in the telencephalon, diencephalon, tegmentum and spinal cord at sites distinct from those expressing ascl1a. Not expressed in the adenohypophysis.

It is found in the nucleus. In terms of biological role, transcriptional regulator. May mediate transcription activation by binding to the E box-containing promoter. Involved in neurogenesis. Involved in maintaining rhombomere boundaries in the hindbrain, probably via up-regulation of delta expression. May mediate transcription activation by binding to the E box-containing promoter. This chain is Achaete-scute homolog 1b, found in Danio rerio (Zebrafish).